Consider the following 3999-residue polypeptide: Hybrid PKS-NRPS synthetase xenE (3999 aa).

A Ketosynthase family 3 (KS3) domain is found at 13-449; sequence REPIAVVGSG…GTNAHCIIEN (437 aa). Catalysis depends on for beta-ketoacyl synthase activity residues cysteine 186, histidine 325, and histidine 369. The 318-residue stretch at 562–879 folds into the Malonyl-CoA:ACP transacylase (MAT) domain; that stretch reads VFTGQGAQWP…TGLLNRGKDD (318 aa). An N-terminal hotdog fold region spans residues 949–1084; sequence NPLLGSRTTD…GRVIVITGET (136 aa). Residues 949-1253 form the PKS/mFAS DH domain; the sequence is NPLLGSRTTD…VVAFAEQTED (305 aa). A dehydratase (DH) domain region spans residues 950-1252; the sequence is PLLGSRTTDV…RVVAFAEQTE (303 aa). Histidine 981 serves as the catalytic Proton acceptor; for dehydratase activity. Positions 1099–1253 are C-terminal hotdog fold; the sequence is LVDIPEDRFY…VVAFAEQTED (155 aa). Aspartate 1159 functions as the Proton donor; for dehydratase activity in the catalytic mechanism. Residues 1298-1593 form a methyltransferase (cMeT) domain region; the sequence is YMKQLVTLFP…FSGADSPMPE (296 aa). One can recognise a Ketoreductase (KR) domain in the interval 2133–2306; that stretch reads TYVLFGLTSD…AASILHLGAV (174 aa). Positions 2414–2495 constitute a Carrier 1 domain; sequence EEILEIVQDA…QLVEYAIGSM (82 aa). An O-(pantetheine 4'-phosphoryl)serine modification is found at serine 2455. Residues 2501–2573 are disordered; it reads PNRADSAKAS…EESPSESVND (73 aa). Low complexity predominate over residues 2526 to 2554; the sequence is SVSSSPSSLPKTSASGSSQQMSEGSSKTS. A condensation region spans residues 2580-3015; it reads EKVLPVSPGQ…EEVSLFTEQE (436 aa). Residues 3045-3453 are adenylation; it reads AVHTDKVALK…RIEGDTQIKL (409 aa). A Carrier 2 domain is found at 3562–3642; the sequence is RKLTDTESKL…AMAAAIQDTS (81 aa). Residue serine 3602 is modified to O-(pantetheine 4'-phosphoryl)serine. The reductase-like (R) domain (R) stretch occupies residues 3681-3900; that stretch reads LTGATGFLGK…IDLITVEKAA (220 aa).

The protein in the C-terminal section; belongs to the NRP synthetase family.

The protein operates within mycotoxin biosynthesis. Functionally, hybrid PKS-NRPS synthetase; part of the gene cluster that mediates the biosynthesis of xenoacremones such as xenoacremone A, a compound that shows inhibitory activity toward the PI3K/AKT signaling pathway and which has the ability to induce apoptosis of A549 lung cancer cells. Within the pathway, cooperation of the hybrid PKS-NRPS xenE and the trans-acting enoyl reductase xenG is responsible for the formation of the reduced tyrosine-nonaketide derivative. The PKS module of xenE acted in combination with the trans-acting enoyl reductase xenG to produce a double-methylated nonaketide attached to the ACP domain. In parallel, the adenylation (A) domain of the NRPS module activated L-tyrosine, which was then transferred to the ACP domain. The condensation (C) domain subsequently linked this group to the polyketide chain, forming an enzyme-bound amide. Reductive release by the C-terminal R domain afforded the aldehyde derivative. The alpha/beta hydrolase xenA then accelerates intramolecular nucleophilic attack to give a pyrrolidone derivative. Subsequently, three enzymes, xenF, xenD, and xenC, coordinately participate in the conversion to xenoacremone B. XenF catalyzes sigmatropic rearrangement to form an A-ring, which leads to an unusual intermediate with a hexane ring, which is required for the formation of the tricarbocyclic product. Epoxidation catalyzed by xenD and the formation of the paracyclophane ether catalyzed by xenC initiate a spontaneous intramolecular Diels-Alder (IMDA) reaction to yield xenoacremone B. Spontaneous hydration of xenoacremone B leads to the formation of xenoacremone A, which undergoes subsequent methylation to afford xenoacremone C. The protein is Hybrid PKS-NRPS synthetase xenE of Xenoacremonium sinensis (Endophyte fungus).